Reading from the N-terminus, the 103-residue chain is Pyrimidine/purine nucleoside phosphorylase (103 aa).

The protein belongs to the nucleoside phosphorylase PpnP family.

It catalyses the reaction a purine D-ribonucleoside + phosphate = a purine nucleobase + alpha-D-ribose 1-phosphate. It carries out the reaction adenosine + phosphate = alpha-D-ribose 1-phosphate + adenine. The catalysed reaction is cytidine + phosphate = cytosine + alpha-D-ribose 1-phosphate. The enzyme catalyses guanosine + phosphate = alpha-D-ribose 1-phosphate + guanine. It catalyses the reaction inosine + phosphate = alpha-D-ribose 1-phosphate + hypoxanthine. It carries out the reaction thymidine + phosphate = 2-deoxy-alpha-D-ribose 1-phosphate + thymine. The catalysed reaction is uridine + phosphate = alpha-D-ribose 1-phosphate + uracil. The enzyme catalyses xanthosine + phosphate = alpha-D-ribose 1-phosphate + xanthine. Its function is as follows. Catalyzes the phosphorolysis of diverse nucleosides, yielding D-ribose 1-phosphate and the respective free bases. Can use uridine, adenosine, guanosine, cytidine, thymidine, inosine and xanthosine as substrates. Also catalyzes the reverse reactions. This Methylobacillus flagellatus (strain ATCC 51484 / DSM 6875 / VKM B-1610 / KT) protein is Pyrimidine/purine nucleoside phosphorylase.